Here is a 298-residue protein sequence, read N- to C-terminus: Aspartate carbamoyltransferase catalytic subunit (298 aa).

Carbamoyl phosphate is bound by residues Arg-54 and Thr-55. Lys-82 serves as a coordination point for L-aspartate. Residues Arg-104, His-132, and Gln-135 each coordinate carbamoyl phosphate. 2 residues coordinate L-aspartate: Arg-165 and Arg-218. Carbamoyl phosphate is bound by residues Gly-260 and Pro-261.

This sequence belongs to the aspartate/ornithine carbamoyltransferase superfamily. ATCase family. Heterododecamer (2C3:3R2) of six catalytic PyrB chains organized as two trimers (C3), and six regulatory PyrI chains organized as three dimers (R2).

It catalyses the reaction carbamoyl phosphate + L-aspartate = N-carbamoyl-L-aspartate + phosphate + H(+). Its pathway is pyrimidine metabolism; UMP biosynthesis via de novo pathway; (S)-dihydroorotate from bicarbonate: step 2/3. Catalyzes the condensation of carbamoyl phosphate and aspartate to form carbamoyl aspartate and inorganic phosphate, the committed step in the de novo pyrimidine nucleotide biosynthesis pathway. The protein is Aspartate carbamoyltransferase catalytic subunit of Wolbachia sp. subsp. Brugia malayi (strain TRS).